The sequence spans 312 residues: Glyoxylate/hydroxypyruvate reductase A (312 aa).

Residue Arg-227 is part of the active site. The Proton donor role is filled by His-275.

Belongs to the D-isomer specific 2-hydroxyacid dehydrogenase family. GhrA subfamily.

Its subcellular location is the cytoplasm. The enzyme catalyses glycolate + NADP(+) = glyoxylate + NADPH + H(+). It catalyses the reaction (R)-glycerate + NAD(+) = 3-hydroxypyruvate + NADH + H(+). The catalysed reaction is (R)-glycerate + NADP(+) = 3-hydroxypyruvate + NADPH + H(+). Functionally, catalyzes the NADPH-dependent reduction of glyoxylate and hydroxypyruvate into glycolate and glycerate, respectively. The protein is Glyoxylate/hydroxypyruvate reductase A of Salmonella typhi.